Reading from the N-terminus, the 116-residue chain is NADH-ubiquinone oxidoreductase chain 3 (116 aa).

The next 3 helical transmembrane spans lie at 3-23 (LIST…LVSF), 56-76 (FFLI…LLPL), and 87-107 (LTFM…IYEW).

This sequence belongs to the complex I subunit 3 family.

Its subcellular location is the mitochondrion membrane. The enzyme catalyses a ubiquinone + NADH + 5 H(+)(in) = a ubiquinol + NAD(+) + 4 H(+)(out). In terms of biological role, core subunit of the mitochondrial membrane respiratory chain NADH dehydrogenase (Complex I) that is believed to belong to the minimal assembly required for catalysis. Complex I functions in the transfer of electrons from NADH to the respiratory chain. The immediate electron acceptor for the enzyme is believed to be ubiquinone. The polypeptide is NADH-ubiquinone oxidoreductase chain 3 (MT-ND3) (Gadus morhua (Atlantic cod)).